We begin with the raw amino-acid sequence, 214 residues long: Adenylate kinase (214 aa).

10–15 (GGGKGT) serves as a coordination point for ATP. The interval 30–59 (STGDMFRENVKGGTELGLKAKEYMDAGQLV) is NMP. Residues Thr31, Arg36, 57-59 (QLV), 85-88 (GFPR), and Gln92 contribute to the AMP site. An LID region spans residues 126 to 163 (GRRVCRVCGATFHVLFNAPKEDGKCDKCGGELYQRSDD). Arg127 provides a ligand contact to ATP. Cys130 and Cys133 together coordinate Zn(2+). Residue 136–137 (TF) participates in ATP binding. Cys150 and Cys153 together coordinate Zn(2+). 2 residues coordinate AMP: Arg160 and Arg171. Gln199 lines the ATP pocket.

This sequence belongs to the adenylate kinase family. As to quaternary structure, monomer.

The protein resides in the cytoplasm. It catalyses the reaction AMP + ATP = 2 ADP. It functions in the pathway purine metabolism; AMP biosynthesis via salvage pathway; AMP from ADP: step 1/1. Its function is as follows. Catalyzes the reversible transfer of the terminal phosphate group between ATP and AMP. Plays an important role in cellular energy homeostasis and in adenine nucleotide metabolism. This chain is Adenylate kinase, found in Desulforudis audaxviator (strain MP104C).